Reading from the N-terminus, the 256-residue chain is Thiazole synthase (256 aa).

The Schiff-base intermediate with DXP role is filled by lysine 95. Residues glycine 156, 182 to 183 (AG), and 204 to 205 (NT) each bind 1-deoxy-D-xylulose 5-phosphate.

Belongs to the ThiG family. In terms of assembly, homotetramer. Forms heterodimers with either ThiH or ThiS.

It localises to the cytoplasm. It carries out the reaction [ThiS sulfur-carrier protein]-C-terminal-Gly-aminoethanethioate + 2-iminoacetate + 1-deoxy-D-xylulose 5-phosphate = [ThiS sulfur-carrier protein]-C-terminal Gly-Gly + 2-[(2R,5Z)-2-carboxy-4-methylthiazol-5(2H)-ylidene]ethyl phosphate + 2 H2O + H(+). Its pathway is cofactor biosynthesis; thiamine diphosphate biosynthesis. Functionally, catalyzes the rearrangement of 1-deoxy-D-xylulose 5-phosphate (DXP) to produce the thiazole phosphate moiety of thiamine. Sulfur is provided by the thiocarboxylate moiety of the carrier protein ThiS. In vitro, sulfur can be provided by H(2)S. The sequence is that of Thiazole synthase from Photobacterium profundum (strain SS9).